Reading from the N-terminus, the 477-residue chain is Proton extrusion protein PxcA (477 aa).

A run of 3 helical transmembrane segments spans residues 239–259 (FILL…ITFV), 354–374 (GIKN…IIST), and 437–457 (FNFL…KYWI).

The protein belongs to the CemA family.

Its subcellular location is the cell inner membrane. Its function is as follows. Required for H(+) efflux immediately after light irradiation to form a rapid H(+) concentration gradient across the thylakoid membranes. Together with PxcL, contributes to transient H(+) uptake following dark to light transition. In Trichodesmium erythraeum (strain IMS101), this protein is Proton extrusion protein PxcA.